The primary structure comprises 112 residues: Larval cuticle protein 4 (112 aa).

The signal sequence occupies residues 1–16 (MFKILLVCALVALVAA). Residues 31-92 (ADGFVSKLVL…PQSDLLPTPP (62 aa)) enclose the Chitin-binding type R&amp;R domain.

Component of the larval cuticle. This Drosophila melanogaster (Fruit fly) protein is Larval cuticle protein 4 (Lcp4).